The chain runs to 557 residues: MFKSDIEIAQESKMKNIKNIAEKIGLTEEDIDLYGKYKCKISLDVLKRNKDKKDGKLILVTAINPTPAGEGKSTVTVGLGQALWKKNKKAVIALREPSLGPVFGIKGGAAGGGYSQVVPMEDINLHFTGDMHAITSANNLLAAAIDNHIHQGNILKIDQRRILFKRVMDMNDRALRNVIVALGGKINGFPREDGFMITVASEIMAILCLAEDLMDLKNKMGEILVAYSTEGKPIYCEDLEVQGAMALLMKDAIKPNLVQTLENTPAIIHGGPFANIAHGCNSILGTKMALKLGDYVITEAGFGADLGAEKFFDIKCRKANLKPNCVVIVATVRALKYNGGIPKENLKEQNMEALSKGIKNLGKHIENVNKFGVPAVVAINKFISDTEEEIEFIKKYCKELGAEVSIAEVWEKGGNGGLELADKVLDTIENKESKFNPIYEETLSIKQKIETIAEEIYGAEGVDYSKEAEKQISEIEKLDLDKKPVCMAKTQYSLSDDAKLLGRPCGFRINVKEVRISNGAGFIVVLTGNVMTMPGLPKKPAANNMNVLSDGNIVGLF.

ATP is bound at residue 66-73; that stretch reads TPAGEGKS.

This sequence belongs to the formate--tetrahydrofolate ligase family.

The catalysed reaction is (6S)-5,6,7,8-tetrahydrofolate + formate + ATP = (6R)-10-formyltetrahydrofolate + ADP + phosphate. Its pathway is one-carbon metabolism; tetrahydrofolate interconversion. The protein is Formate--tetrahydrofolate ligase of Clostridium botulinum (strain ATCC 19397 / Type A).